A 235-amino-acid polypeptide reads, in one-letter code: (5-formylfuran-3-yl)methyl phosphate synthase (235 aa).

Lysine 27 functions as the Schiff-base intermediate with substrate in the catalytic mechanism. The Proton acceptor role is filled by lysine 85.

It belongs to the MfnB family.

It catalyses the reaction 2 D-glyceraldehyde 3-phosphate = 4-(hydroxymethyl)-2-furancarboxaldehyde phosphate + phosphate + 2 H2O. It participates in cofactor biosynthesis; methanofuran biosynthesis. Its function is as follows. Catalyzes the formation of 4-(hydroxymethyl)-2-furancarboxaldehyde phosphate (4-HFC-P) from two molecules of glyceraldehyde-3-P (GA-3-P). This is (5-formylfuran-3-yl)methyl phosphate synthase from Methanococcus aeolicus (strain ATCC BAA-1280 / DSM 17508 / OCM 812 / Nankai-3).